We begin with the raw amino-acid sequence, 386 residues long: Succinate--CoA ligase [ADP-forming] subunit beta (386 aa).

One can recognise an ATP-grasp domain in the interval 9–243 (KQLFRKYSIP…PAEDDPAEAE (235 aa)). ATP is bound by residues Lys-45, 52–54 (GRG), Glu-98, Val-101, and Glu-106. Asn-198 and Asp-212 together coordinate Mg(2+). Substrate is bound by residues Asn-263 and 320-322 (GIL).

Belongs to the succinate/malate CoA ligase beta subunit family. In terms of assembly, heterotetramer of two alpha and two beta subunits. Mg(2+) is required as a cofactor.

It carries out the reaction succinate + ATP + CoA = succinyl-CoA + ADP + phosphate. The enzyme catalyses GTP + succinate + CoA = succinyl-CoA + GDP + phosphate. It participates in carbohydrate metabolism; tricarboxylic acid cycle; succinate from succinyl-CoA (ligase route): step 1/1. Functionally, succinyl-CoA synthetase functions in the citric acid cycle (TCA), coupling the hydrolysis of succinyl-CoA to the synthesis of either ATP or GTP and thus represents the only step of substrate-level phosphorylation in the TCA. The beta subunit provides nucleotide specificity of the enzyme and binds the substrate succinate, while the binding sites for coenzyme A and phosphate are found in the alpha subunit. This Desulfotalea psychrophila (strain LSv54 / DSM 12343) protein is Succinate--CoA ligase [ADP-forming] subunit beta.